Reading from the N-terminus, the 230-residue chain is Urease accessory protein UreF (230 aa).

It belongs to the UreF family. UreD, UreF and UreG form a complex that acts as a GTP-hydrolysis-dependent molecular chaperone, activating the urease apoprotein by helping to assemble the nickel containing metallocenter of UreC. The UreE protein probably delivers the nickel.

It is found in the cytoplasm. Its function is as follows. Required for maturation of urease via the functional incorporation of the urease nickel metallocenter. In Allorhizobium ampelinum (strain ATCC BAA-846 / DSM 112012 / S4) (Agrobacterium vitis (strain S4)), this protein is Urease accessory protein UreF.